The following is a 171-amino-acid chain: Putative RING finger protein 027R (171 aa).

Residues 121–163 form an RING-type zinc finger; it reads CAVCMTNPVWVDFVWSCKHISTCIKCLKMLSRGSNGFKCPICR.

Belongs to the IIV-6 157L family.

The sequence is that of Putative RING finger protein 027R from Aedes vexans (Inland floodwater mosquito).